Here is a 461-residue protein sequence, read N- to C-terminus: Glycine--tRNA ligase (461 aa).

Arg-99 and Glu-173 together coordinate substrate. ATP is bound by residues 205 to 207 (RNE), 215 to 220 (FRTREF), 289 to 290 (EL), and 333 to 336 (GADR). 220 to 224 (FEQME) is a binding site for substrate. Position 329 to 333 (329 to 333 (EPSLG)) interacts with substrate.

It belongs to the class-II aminoacyl-tRNA synthetase family. Homodimer.

It localises to the cytoplasm. It catalyses the reaction tRNA(Gly) + glycine + ATP = glycyl-tRNA(Gly) + AMP + diphosphate. Catalyzes the attachment of glycine to tRNA(Gly). The sequence is that of Glycine--tRNA ligase from Lysinibacillus sphaericus (strain C3-41).